Consider the following 177-residue polypeptide: Protein TERMINAL FLOWER 1 (177 aa).

The protein belongs to the phosphatidylethanolamine-binding protein family. As to expression, expressed below the apical dome of inflorescence and coflorescence meristems, and in inflorescence stem.

Its subcellular location is the cytoplasm. Its function is as follows. Controls inflorescence meristem identity and is required for maintenance of an indeterminate inflorescence. Prevents the expression of 'APETALA1' and 'LEAFY'. Also plays a role in the regulation of the time of flowering in the long-day flowering pathway. May form complexes with phosphorylated ligands by interfering with kinases and their effectors. The chain is Protein TERMINAL FLOWER 1 (TFL1) from Arabidopsis thaliana (Mouse-ear cress).